Reading from the N-terminus, the 616-residue chain is Xaa-Pro aminopeptidase app-1 (616 aa).

The a peptide site is built by arginine 78 and histidine 392. Residues aspartate 413, aspartate 424, and histidine 487 each contribute to the Zn(2+) site. Positions 487, 496, and 522 each coordinate a peptide. The Zn(2+) site is built by glutamate 522 and glutamate 536.

It belongs to the peptidase M24B family. As to quaternary structure, homodimer. May interact with pid-2, pid-4 and pid-5. The cofactor is Zn(2+). In terms of tissue distribution, specifically expressed in the intestine.

The protein resides in the cytoplasm. The catalysed reaction is Release of any N-terminal amino acid, including proline, that is linked to proline, even from a dipeptide or tripeptide.. Its activity is regulated as follows. Strongly inhibited by the metal ion chelators EDTA and 1,10-phenanthroline. Also inhibited by apstatin. Activity towards bradykinin is inhibited by Mn(2+) and Zn(2+) at all concentrations tested, whereas Co(2+) is inhibitory at concentrations above 100 uM and activatory at 10 uM. Its function is as follows. Catalyzes the removal of a penultimate prolyl residue from the N-termini of peptides, such as Arg-Pro-Pro. Has activity towards the flp-9 neuropeptide KPSFVRF-amide. This is Xaa-Pro aminopeptidase app-1 from Caenorhabditis elegans.